The sequence spans 143 residues: CSAVAVRTLRPLSLSARAACSSEDKITVHFINRDGDKLTAKGKPGDSLLDVVVENNLDIDGFGACEGTLACSTCHLIFEDHIFEKLDAITDEEMDMLDLAYGLTETSRLGCQICLKKSMDNMTVRVPEAVADARQSVDLSKNS.

The N-terminal 19 residues, 1 to 19 (CSAVAVRTLRPLSLSARAA), are a transit peptide targeting the mitochondrion. One can recognise a 2Fe-2S ferredoxin-type domain in the interval 26 to 130 (ITVHFINRDG…NMTVRVPEAV (105 aa)). Positions 65, 71, 74, and 111 each coordinate [2Fe-2S] cluster.

This sequence belongs to the adrenodoxin/putidaredoxin family. [2Fe-2S] cluster serves as cofactor.

The protein localises to the mitochondrion matrix. In terms of biological role, essential for the synthesis of various steroid hormones. Participates in the reduction of mitochondrial cytochrome P450 for steroidogenesis. Transfers electrons from adrenodoxin reductase to CYP11A1, a cytochrome P450 that catalyzes cholesterol side-chain cleavage. Does not form a ternary complex with adrenodoxin reductase and CYP11A1 but shuttles between the two enzymes to transfer electrons. The protein is Adrenodoxin, mitochondrial (FDX1) of Gallus gallus (Chicken).